A 496-amino-acid chain; its full sequence is Glycogen synthase (496 aa).

An ADP-alpha-D-glucose-binding site is contributed by K24.

The protein belongs to the glycosyltransferase 1 family. Bacterial/plant glycogen synthase subfamily.

The enzyme catalyses [(1-&gt;4)-alpha-D-glucosyl](n) + ADP-alpha-D-glucose = [(1-&gt;4)-alpha-D-glucosyl](n+1) + ADP + H(+). It participates in glycan biosynthesis; glycogen biosynthesis. Synthesizes alpha-1,4-glucan chains using ADP-glucose. This Nitrosospira multiformis (strain ATCC 25196 / NCIMB 11849 / C 71) protein is Glycogen synthase.